Here is a 60-residue protein sequence, read N- to C-terminus: Protein CADMIUM TOLERANCE 4 (60 aa).

A helical membrane pass occupies residues 26–42 (GFLYACLFMLCCCFCCY).

This sequence belongs to the CYSTM1 family. In terms of tissue distribution, mainly expressed in shoots, and, to a lower extent, in roots.

It is found in the cell membrane. It localises to the secreted. The protein localises to the cell wall. In terms of biological role, confers resistance to heavy metal ions (e.g. aluminium (Al)) by chelating them at the plasma membrane of root cells, thus stopping their entry and reducing their accumulation. The protein is Protein CADMIUM TOLERANCE 4 of Oryza sativa subsp. japonica (Rice).